The chain runs to 57 residues: UPF0391 membrane protein RPD_2934 (57 aa).

The next 2 helical transmembrane spans lie at 6 to 26 (WALIFLVISVVAGIFGFTGVS) and 35 to 55 (ILFYIFAAIFIVLLILGFTIF).

The protein belongs to the UPF0391 family.

It localises to the cell membrane. This is UPF0391 membrane protein RPD_2934 from Rhodopseudomonas palustris (strain BisB5).